Consider the following 228-residue polypeptide: Small ribosomal subunit protein uS3 (228 aa).

The KH type-2 domain maps to 39-107 (TREYLQDKLK…PVHINIEEIR (69 aa)).

Belongs to the universal ribosomal protein uS3 family. Part of the 30S ribosomal subunit. Forms a tight complex with proteins S10 and S14.

Binds the lower part of the 30S subunit head. Binds mRNA in the 70S ribosome, positioning it for translation. This is Small ribosomal subunit protein uS3 from Pseudomonas entomophila (strain L48).